Reading from the N-terminus, the 119-residue chain is NAD(P)H-quinone oxidoreductase subunit M (119 aa).

The protein belongs to the complex I NdhM subunit family. NDH-1 can be composed of about 15 different subunits; different subcomplexes with different compositions have been identified which probably have different functions.

The protein localises to the cellular thylakoid membrane. It carries out the reaction a plastoquinone + NADH + (n+1) H(+)(in) = a plastoquinol + NAD(+) + n H(+)(out). The catalysed reaction is a plastoquinone + NADPH + (n+1) H(+)(in) = a plastoquinol + NADP(+) + n H(+)(out). Its function is as follows. NDH-1 shuttles electrons from an unknown electron donor, via FMN and iron-sulfur (Fe-S) centers, to quinones in the respiratory and/or the photosynthetic chain. The immediate electron acceptor for the enzyme in this species is believed to be plastoquinone. Couples the redox reaction to proton translocation, and thus conserves the redox energy in a proton gradient. Cyanobacterial NDH-1 also plays a role in inorganic carbon-concentration. The sequence is that of NAD(P)H-quinone oxidoreductase subunit M from Gloeothece citriformis (strain PCC 7424) (Cyanothece sp. (strain PCC 7424)).